The primary structure comprises 276 residues: A-factor receptor protein (276 aa).

Residues V8–V68 form the HTH tetR-type domain. The segment at residues A31–F50 is a DNA-binding region (H-T-H motif). The segment covering E207 to A220 has biased composition (basic and acidic residues). Residues E207–A276 form a disordered region. A compositionally biased stretch (low complexity) spans E221–S235. The segment covering R236–G257 has biased composition (gly residues).

Homodimer or multimer. Binds to both DNA and A-factor as a homodimer.

The protein resides in the cytoplasm. Represses adpA expression by binding to the promoter region in the absence of A-factor, causing repression of streptomycin production and of sporulation. In Streptomyces griseus, this protein is A-factor receptor protein (arpA).